The sequence spans 405 residues: Replication factor C large subunit (405 aa).

47–54 (GPPGVGKT) contributes to the ATP binding site.

Belongs to the activator 1 small subunits family. RfcL subfamily. As to quaternary structure, heteromultimer composed of small subunits (RfcS) and large subunits (RfcL).

In terms of biological role, part of the RFC clamp loader complex which loads the PCNA sliding clamp onto DNA. The sequence is that of Replication factor C large subunit from Saccharolobus islandicus (strain L.S.2.15 / Lassen #1) (Sulfolobus islandicus).